Reading from the N-terminus, the 1380-residue chain is DNA-directed RNA polymerase subunit beta (1380 aa).

It belongs to the RNA polymerase beta chain family. As to quaternary structure, the RNAP catalytic core consists of 2 alpha, 1 beta, 1 beta' and 1 omega subunit. When a sigma factor is associated with the core the holoenzyme is formed, which can initiate transcription.

It catalyses the reaction RNA(n) + a ribonucleoside 5'-triphosphate = RNA(n+1) + diphosphate. DNA-dependent RNA polymerase catalyzes the transcription of DNA into RNA using the four ribonucleoside triphosphates as substrates. The chain is DNA-directed RNA polymerase subunit beta from Sinorhizobium medicae (strain WSM419) (Ensifer medicae).